We begin with the raw amino-acid sequence, 509 residues long: MDIRAAEISAILKDQIKNFGKEAEVSEVGQVLSVGDGIARVYGLDNVQAGEMVEFPGGIRGMALNLEVDNVGVVIFGADRDIKEGDTVKRTGAIVEVPVGPGLLGRVVDALGNPIDGKGPIQATERRRVDVKAPGIIPRKSVHEPMSTGLKAIDALIPIGRGQRELIIGDRQTGKTAIILDTFLNQKPLNDGDDESQKLYCIYVAVGQKRSTVAQFVKVLEERGALEYSIVVAATASDPAPMQFLAPFAGCAMGEYFRDNGKHAVIAYDDLSKQAVAYRQMSLLLRRPPGREAYPGDVFYLHSRLLERAAKMNDDNGSGSLTALPVIETQANDVSAYIPTNVISITDGQIFLETNLFFQGVRPAVNVGLSVSRVGSAAQVKAMKQVAGSIKGELAQYREMAAFAQFGSDLDAATQRLLNRGARLTELLKQPQFSPLKTEEQVVVIFAGVNGYLDALALRDVGRFEQGLLTHMRSEGKEILDAIRVEKALSDDLRAKLKAEIDAYAKNFS.

169 to 176 contacts ATP; sequence GDRQTGKT.

The protein belongs to the ATPase alpha/beta chains family. F-type ATPases have 2 components, CF(1) - the catalytic core - and CF(0) - the membrane proton channel. CF(1) has five subunits: alpha(3), beta(3), gamma(1), delta(1), epsilon(1). CF(0) has three main subunits: a(1), b(2) and c(9-12). The alpha and beta chains form an alternating ring which encloses part of the gamma chain. CF(1) is attached to CF(0) by a central stalk formed by the gamma and epsilon chains, while a peripheral stalk is formed by the delta and b chains.

Its subcellular location is the cell inner membrane. The enzyme catalyses ATP + H2O + 4 H(+)(in) = ADP + phosphate + 5 H(+)(out). Functionally, produces ATP from ADP in the presence of a proton gradient across the membrane. The alpha chain is a regulatory subunit. This is ATP synthase subunit alpha from Chelativorans sp. (strain BNC1).